Here is a 1941-residue protein sequence, read N- to C-terminus: Myosin light chain kinase, smooth muscle (1941 aa).

Ig-like C2-type domains are found at residues Pro-33 to Thr-122 and Pro-156 to Ser-244. Cysteines 177 and 228 form a disulfide. Tyr-226 is subject to Phosphotyrosine; by ABL1. Residues Ala-255–Gln-329 form a disordered region. Residues Asn-286 to Lys-305 are compositionally biased toward polar residues. Ser-295 is subject to Phosphoserine. A compositionally biased stretch (basic and acidic residues) spans Ser-306–Arg-320. 2 positions are modified to phosphoserine: Ser-333 and Ser-355. 4 Ig-like C2-type domains span residues Pro-402–Ser-485, Pro-502–Thr-587, Pro-611–Thr-699, and Pro-709–Arg-809. Disulfide bonds link Cys-423-Cys-475 and Cys-523-Cys-571. Tyr-452 bears the Phosphotyrosine; by ABL1 and SRC mark. Residues Cys-730 and Cys-793 are joined by a disulfide bond. Phosphotyrosine; by ABL1 is present on Tyr-780. Tandem repeats lie at residues Asp-856–Leu-883, Asp-884–Met-911, Asp-912–Val-939, and Asp-940–Pro-966. A 5 X 28 AA approximate tandem repeats region spans residues Asp-856–Asn-985. An actin-binding (calcium/calmodulin-sensitive) region spans residues Met-911 to Pro-951. The tract at residues Gln-920–Pro-1120 is disordered. Ser-935 carries the post-translational modification Phosphoserine. The segment at Pro-936 to Pro-951 is calmodulin-binding. A 1-5; truncated repeat occupies Asp-967 to Asn-985. A run of 5 repeats spans residues Leu-990–Gly-1002, Asp-1003–Gly-1014, Asn-1015–Gly-1026, Asn-1027–Gly-1038, and Asn-1039–Ile-1049. The interval Leu-990–Ile-1049 is 5 X 12 AA approximate tandem repeats. Residues Pro-1048–Val-1482 form an actin-binding (calcium/calmodulin-insensitive) region. Positions Ala-1052–Gln-1065 are enriched in polar residues. The span at Ala-1085–Cys-1099 shows a compositional bias: basic and acidic residues. An Ig-like C2-type 7 domain is found at Pro-1120–Thr-1208. The cysteines at positions 1141 and 1192 are disulfide-linked. Residues Ala-1212–Ala-1257 form a disordered region. One can recognise an Ig-like C2-type 8 domain in the interval Pro-1260 to Thr-1348. The Fibronectin type-III domain maps to Pro-1356–Lys-1449. The tract at residues Ser-1435–Val-1469 is disordered. Positions Pro-1453–Pro-1467 are enriched in acidic residues. At Ser-1460 the chain carries Phosphoserine. Phosphotyrosine; by ABL1 is present on Tyr-1471. Positions Tyr-1486–Leu-1741 constitute a Protein kinase domain. ATP is bound by residues Leu-1492–Val-1500 and Lys-1515. Tyr-1597 carries the phosphotyrosine; by ABL1 modification. Asp-1607 acts as the Proton acceptor in catalysis. The residue at position 1657 (Tyr-1657) is a Phosphotyrosine; by ABL1. Residues Thr-1733–Thr-1796 form a calmodulin-binding region. Residues Ser-1781, Ser-1782, Ser-1794, Ser-1795, and Ser-1798 each carry the phosphoserine modification. Residues Leu-1789–Glu-1809 are disordered. Polar residues predominate over residues Arg-1792–Ile-1803. Phosphothreonine is present on Thr-1800. Phosphoserine is present on Ser-1801. The region spanning Pro-1831–Ile-1920 is the Ig-like C2-type 9 domain. Residues Cys-1852 and Cys-1904 are joined by a disulfide bond.

This sequence belongs to the protein kinase superfamily. CAMK Ser/Thr protein kinase family. All isoforms including Telokin bind calmodulin. Interacts with CTTN; this interaction is reduced during thrombin-induced endothelial cell (EC) contraction but is promoted by the barrier-protective agonist sphingosine 1-phosphate (S1P) within lamellipodia. A complex made of ABL1, CTTN and MYLK regulates cortical actin-based cytoskeletal rearrangement critical to sphingosine 1-phosphate (S1P)-mediated endothelial cell (EC) barrier enhancement. Binds to NAA10/ARD1. Interacts with SVIL and PTK2B/PYK2. The cofactor is Mg(2+). Ca(2+) serves as cofactor. Can probably be down-regulated by phosphorylation. Tyrosine phosphorylation by ABL1 increases kinase activity, reverses MLCK-mediated inhibition of Arp2/3-mediated actin polymerization, and enhances CTTN-binding. Phosphorylation by SRC at Tyr-452 promotes CTTN binding. Post-translationally, the C-terminus is deglutamylated by AGTPBP1/CCP1, AGBL1/CCP4 and AGBL4/CCP6, leading to the formation of Myosin light chain kinase, smooth muscle, deglutamylated form. The consequences of C-terminal deglutamylation are unknown. In terms of tissue distribution, smooth muscle isoform is expressed in all tissues with highest levels in bladder, uterus, vas deferens, colon, ileum, and tracheae. Isoform 1 is expressed in lung, bladder, and vas deferens. Telokin is expressed in smooth muscle cells of the gut, reproductive tract and urinary tract, including in uterus, vas deferens, bladder, colon, kidney, ureter and ovary. Telokin is also detected in the trachea.

It localises to the cytoplasm. The protein localises to the cell projection. The protein resides in the lamellipodium. It is found in the cleavage furrow. Its subcellular location is the cytoskeleton. It localises to the stress fiber. It catalyses the reaction L-seryl-[myosin light chain] + ATP = O-phospho-L-seryl-[myosin light chain] + ADP + H(+). It carries out the reaction L-threonyl-[myosin light chain] + ATP = O-phospho-L-threonyl-[myosin light chain] + ADP + H(+). Its function is as follows. Calcium/calmodulin-dependent myosin light chain kinase implicated in smooth muscle contraction via phosphorylation of myosin light chains (MLC). Also regulates actin-myosin interaction through a non-kinase activity. Phosphorylates PTK2B/PYK2 and myosin light-chains. Involved in the inflammatory response (e.g. apoptosis, vascular permeability, leukocyte diapedesis), cell motility and morphology, airway hyperreactivity and other activities relevant to asthma. Required for tonic airway smooth muscle contraction that is necessary for physiological and asthmatic airway resistance. Necessary for gastrointestinal motility. Implicated in the regulation of endothelial as well as vascular permeability, probably via the regulation of cytoskeletal rearrangements. In the nervous system it has been shown to control the growth initiation of astrocytic processes in culture and to participate in transmitter release at synapses formed between cultured sympathetic ganglion cells. Critical participant in signaling sequences that result in fibroblast apoptosis. Plays a role in the regulation of epithelial cell survival. Required for epithelial wound healing, especially during actomyosin ring contraction during purse-string wound closure. Mediates RhoA-dependent membrane blebbing. Triggers TRPC5 channel activity in a calcium-dependent signaling, by inducing its subcellular localization at the plasma membrane. Promotes cell migration (including tumor cells) and tumor metastasis. PTK2B/PYK2 activation by phosphorylation mediates ITGB2 activation and is thus essential to trigger neutrophil transmigration during acute lung injury (ALI). May regulate optic nerve head astrocyte migration. Probably involved in mitotic cytoskeletal regulation. Regulates tight junction probably by modulating ZO-1 exchange in the perijunctional actomyosin ring. Mediates burn-induced microvascular barrier injury; triggers endothelial contraction in the development of microvascular hyperpermeability by phosphorylating MLC. Essential for intestinal barrier dysfunction. Mediates Giardia spp.-mediated reduced epithelial barrier function during giardiasis intestinal infection via reorganization of cytoskeletal F-actin and tight junctional ZO-1. Necessary for hypotonicity-induced Ca(2+) entry and subsequent activation of volume-sensitive organic osmolyte/anion channels (VSOAC) in cervical cancer cells. The sequence is that of Myosin light chain kinase, smooth muscle from Mus musculus (Mouse).